We begin with the raw amino-acid sequence, 268 residues long: Ubiquinone biosynthesis protein COQ4 homolog, mitochondrial (268 aa).

The Zn(2+) site is built by His-171, Asp-172, His-175, and Glu-187.

Belongs to the COQ4 family. Component of a multi-subunit COQ enzyme complex. Requires Zn(2+) as cofactor.

Its subcellular location is the mitochondrion inner membrane. It carries out the reaction a 4-hydroxy-3-methoxy-5-(all-trans-polyprenyl)benzoate + H(+) = a 2-methoxy-6-(all-trans-polyprenyl)phenol + CO2. It functions in the pathway cofactor biosynthesis; ubiquinone biosynthesis. Its function is as follows. Lyase that catalyzes the C1-decarboxylation of 4-hydroxy-3-methoxy-5-(all-trans-polyprenyl)benzoic acid into 2-methoxy-6-(all-trans-polyprenyl)phenol during ubiquinone biosynthesis. The protein is Ubiquinone biosynthesis protein COQ4 homolog, mitochondrial of Drosophila erecta (Fruit fly).